The sequence spans 404 residues: MAKSVLKAAPVVVGLTALMERHADALSSQLQAHHLKVFPPHSEKGIRTFGPSEASKLLGVGESYLRQTASEMPELNVSMSPGGRRMFSIEDIHVIRKYMDQVGRGNRRYLPHRRGGEQLQVISVMNFKGGSGKTTTAAHLAQYLAMRGYRVLAIDLDPQASLSALFGSQPETDVGPNETLYGAIRYDDEQVAIERVVRGTYIPDLHLIPGNLELMEFEHDTPRALMNRKEGDTLFYGRISQVIEDIADNYDVVVIDCPPQLGYLTLSALTAATSILVTVHPQMLDVMSMNQFLAMTSNLLREIENAGAKFKFNWMRYLITRFEPSDGPQNQMVGYLRSIFGENVLNFPMLKTTAVSDAGLTNQTLFEVERGLFTRSTYDRALEAMNAVNDEIETLIKKAWGRPT.

Its function is as follows. This protein is coded by a hairy root Ri plasmid. It is possibly involved in regulating the plasmid copy-number. This is Putative replication protein A (repA) from Rhizobium rhizogenes (Agrobacterium rhizogenes).